The chain runs to 651 residues: DNA topoisomerase 3 (651 aa).

In terms of domain architecture, Toprim spans 1-134; that stretch reads MRLFIAEKPS…KRDKILRCLI (134 aa). Mg(2+) is bound by residues Glu7, Asp103, and Asp105. Residues 155–612 form the Topo IA-type catalytic domain; it reads FIPLATSALA…NLNQILPDLV (458 aa). Positions 194-199 are interaction with DNA; the sequence is SVGRVQ. The O-(5'-phospho-DNA)-tyrosine intermediate role is filled by Tyr337. The disordered stretch occupies residues 631 to 651; that stretch reads SDRAKPKSAVKKSSKSNGETD.

It belongs to the type IA topoisomerase family. Mg(2+) is required as a cofactor.

It catalyses the reaction ATP-independent breakage of single-stranded DNA, followed by passage and rejoining.. Releases the supercoiling and torsional tension of DNA, which is introduced during the DNA replication and transcription, by transiently cleaving and rejoining one strand of the DNA duplex. Introduces a single-strand break via transesterification at a target site in duplex DNA. The scissile phosphodiester is attacked by the catalytic tyrosine of the enzyme, resulting in the formation of a DNA-(5'-phosphotyrosyl)-enzyme intermediate and the expulsion of a 3'-OH DNA strand. The free DNA strand then undergoes passage around the unbroken strand, thus removing DNA supercoils. Finally, in the religation step, the DNA 3'-OH attacks the covalent intermediate to expel the active-site tyrosine and restore the DNA phosphodiester backbone. This is DNA topoisomerase 3 from Haemophilus influenzae (strain ATCC 51907 / DSM 11121 / KW20 / Rd).